The following is a 158-amino-acid chain: Cyclic pyranopterin monophosphate synthase (158 aa).

Substrate is bound by residues Leu75 to His77 and Met113 to Glu114. Asp128 is a catalytic residue.

It belongs to the MoaC family. In terms of assembly, homohexamer; trimer of dimers.

The enzyme catalyses (8S)-3',8-cyclo-7,8-dihydroguanosine 5'-triphosphate = cyclic pyranopterin phosphate + diphosphate. Its pathway is cofactor biosynthesis; molybdopterin biosynthesis. Functionally, catalyzes the conversion of (8S)-3',8-cyclo-7,8-dihydroguanosine 5'-triphosphate to cyclic pyranopterin monophosphate (cPMP). This is Cyclic pyranopterin monophosphate synthase from Vibrio campbellii (strain ATCC BAA-1116).